An 871-amino-acid chain; its full sequence is Alanine--tRNA ligase (871 aa).

4 residues coordinate Zn(2+): H590, H594, C694, and H698.

This sequence belongs to the class-II aminoacyl-tRNA synthetase family. Requires Zn(2+) as cofactor.

It is found in the cytoplasm. It carries out the reaction tRNA(Ala) + L-alanine + ATP = L-alanyl-tRNA(Ala) + AMP + diphosphate. In terms of biological role, catalyzes the attachment of alanine to tRNA(Ala) in a two-step reaction: alanine is first activated by ATP to form Ala-AMP and then transferred to the acceptor end of tRNA(Ala). Also edits incorrectly charged Ser-tRNA(Ala) and Gly-tRNA(Ala) via its editing domain. The sequence is that of Alanine--tRNA ligase from Thermoplasma acidophilum (strain ATCC 25905 / DSM 1728 / JCM 9062 / NBRC 15155 / AMRC-C165).